Consider the following 640-residue polypeptide: Chaperone protein DnaK (640 aa).

The residue at position 199 (Thr-199) is a Phosphothreonine; by autocatalysis. The tract at residues 603–640 (YAAGETESSAAEPGEPQEKTVDAEVVDAEFEEVKDDKK) is disordered. The segment covering 626–640 (EVVDAEFEEVKDDKK) has biased composition (acidic residues).

This sequence belongs to the heat shock protein 70 family.

In terms of biological role, acts as a chaperone. This chain is Chaperone protein DnaK, found in Methylobacillus flagellatus (strain ATCC 51484 / DSM 6875 / VKM B-1610 / KT).